Here is a 242-residue protein sequence, read N- to C-terminus: Uridylate kinase (242 aa).

16-19 (KVSG) provides a ligand contact to ATP. UMP is bound at residue Gly58. ATP-binding residues include Gly59 and Arg63. UMP is bound by residues Asp78 and 139-146 (TGNPFCTT). ATP-binding residues include Thr166, Gln167, Tyr172, and Asp175.

It belongs to the UMP kinase family. In terms of assembly, homohexamer.

The protein localises to the cytoplasm. It catalyses the reaction UMP + ATP = UDP + ADP. The protein operates within pyrimidine metabolism; CTP biosynthesis via de novo pathway; UDP from UMP (UMPK route): step 1/1. Inhibited by UTP. Functionally, catalyzes the reversible phosphorylation of UMP to UDP. The sequence is that of Uridylate kinase from Rickettsia conorii (strain ATCC VR-613 / Malish 7).